The following is a 153-amino-acid chain: Aspartate carbamoyltransferase regulatory chain (153 aa).

Zn(2+)-binding residues include Cys-108, Cys-113, Cys-137, and Cys-140.

The protein belongs to the PyrI family. Contains catalytic and regulatory chains. Zn(2+) serves as cofactor.

Its function is as follows. Involved in allosteric regulation of aspartate carbamoyltransferase. This is Aspartate carbamoyltransferase regulatory chain from Methanosphaera stadtmanae (strain ATCC 43021 / DSM 3091 / JCM 11832 / MCB-3).